Reading from the N-terminus, the 290-residue chain is uncharacterized protein (290 aa).

5 consecutive transmembrane segments (helical) span residues 14-34 (ALLNIFAYVILAVVKLVIGIL), 82-102 (ISSLVASFIMMAVGIEVLIGG), 115-135 (NLIAAWTALGSAVFMYGIYLY), 158-174 (DAFVSAGAFIGVFSSQL), and 176-196 (LPWVDPVTAFIIGIIICKTAW).

It belongs to the cation diffusion facilitator (CDF) transporter (TC 2.A.4) family.

The protein localises to the cell membrane. This is an uncharacterized protein from Bacillus subtilis (strain 168).